Consider the following 449-residue polypeptide: Maturation protein A (449 aa).

The protein belongs to the Leviviricetes maturation protein family. In terms of assembly, interacts with the host pilus.

The protein resides in the virion. In terms of biological role, the maturation protein is required for the typical attachment of the phage to the side of the bacterial F-pili. Binds to sequences located toward each end of the genome, hence circularizing it. The RNA genome-maturation protein A complex is released from the capsid upon host receptor binding. Maturation protein A enters the cell along with the viral RNA. In Pseudomonas aeruginosa (Bacteriophage PP7), this protein is Maturation protein A.